An 805-amino-acid chain; its full sequence is Leucine--tRNA ligase (805 aa).

The short motif at 40–51 (PYPSGAGLHVGH) is the 'HIGH' region element. Residues 576 to 580 (KMSKS) carry the 'KMSKS' region motif. K579 provides a ligand contact to ATP.

The protein belongs to the class-I aminoacyl-tRNA synthetase family.

The protein localises to the cytoplasm. The catalysed reaction is tRNA(Leu) + L-leucine + ATP = L-leucyl-tRNA(Leu) + AMP + diphosphate. The sequence is that of Leucine--tRNA ligase from Geobacillus thermodenitrificans (strain NG80-2).